Reading from the N-terminus, the 453-residue chain is Bifunctional protein GlmU (453 aa).

The tract at residues 1-225 is pyrophosphorylase; sequence MNIVILAAGT…EWETLGVNSK (225 aa). UDP-N-acetyl-alpha-D-glucosamine contacts are provided by residues 6 to 9, Lys20, Gln71, 76 to 77, 98 to 100, Gly135, Glu150, Asn165, and Asn223; these read LAAG, GT, and YGD. Asp100 serves as a coordination point for Mg(2+). Asn223 contributes to the Mg(2+) binding site. The tract at residues 226–246 is linker; it reads AQLAELERIHQRNVADALLVD. The N-acetyltransferase stretch occupies residues 247-453; it reads GVTLADPARV…GYVRPVKKKS (207 aa). The UDP-N-acetyl-alpha-D-glucosamine site is built by Arg329 and Lys347. The active-site Proton acceptor is His359. UDP-N-acetyl-alpha-D-glucosamine is bound by residues Tyr362 and Asn373. Residues Ala376, 382–383, Ser401, and Ala419 each bind acetyl-CoA; that span reads NY.

In the N-terminal section; belongs to the N-acetylglucosamine-1-phosphate uridyltransferase family. The protein in the C-terminal section; belongs to the transferase hexapeptide repeat family. In terms of assembly, homotrimer. Mg(2+) serves as cofactor.

Its subcellular location is the cytoplasm. The catalysed reaction is alpha-D-glucosamine 1-phosphate + acetyl-CoA = N-acetyl-alpha-D-glucosamine 1-phosphate + CoA + H(+). It catalyses the reaction N-acetyl-alpha-D-glucosamine 1-phosphate + UTP + H(+) = UDP-N-acetyl-alpha-D-glucosamine + diphosphate. It functions in the pathway nucleotide-sugar biosynthesis; UDP-N-acetyl-alpha-D-glucosamine biosynthesis; N-acetyl-alpha-D-glucosamine 1-phosphate from alpha-D-glucosamine 6-phosphate (route II): step 2/2. The protein operates within nucleotide-sugar biosynthesis; UDP-N-acetyl-alpha-D-glucosamine biosynthesis; UDP-N-acetyl-alpha-D-glucosamine from N-acetyl-alpha-D-glucosamine 1-phosphate: step 1/1. Its pathway is bacterial outer membrane biogenesis; LPS lipid A biosynthesis. Functionally, catalyzes the last two sequential reactions in the de novo biosynthetic pathway for UDP-N-acetylglucosamine (UDP-GlcNAc). The C-terminal domain catalyzes the transfer of acetyl group from acetyl coenzyme A to glucosamine-1-phosphate (GlcN-1-P) to produce N-acetylglucosamine-1-phosphate (GlcNAc-1-P), which is converted into UDP-GlcNAc by the transfer of uridine 5-monophosphate (from uridine 5-triphosphate), a reaction catalyzed by the N-terminal domain. This chain is Bifunctional protein GlmU, found in Burkholderia orbicola (strain MC0-3).